The following is a 343-amino-acid chain: Methionine import ATP-binding protein MetN 1 (343 aa).

Residues 2–241 (IKLSNITKVF…PKTPLAQKFI (240 aa)) enclose the ABC transporter domain. 38 to 45 (GASGAGKS) lines the ATP pocket.

Belongs to the ABC transporter superfamily. Methionine importer (TC 3.A.1.24) family. The complex is composed of two ATP-binding proteins (MetN), two transmembrane proteins (MetI) and a solute-binding protein (MetQ).

The protein localises to the cell inner membrane. The catalysed reaction is L-methionine(out) + ATP + H2O = L-methionine(in) + ADP + phosphate + H(+). It carries out the reaction D-methionine(out) + ATP + H2O = D-methionine(in) + ADP + phosphate + H(+). Part of the ABC transporter complex MetNIQ involved in methionine import. Responsible for energy coupling to the transport system. The chain is Methionine import ATP-binding protein MetN 1 from Salmonella paratyphi A (strain ATCC 9150 / SARB42).